Consider the following 893-residue polypeptide: DNA gyrase subunit A (893 aa).

The Topo IIA-type catalytic domain maps to 35–501 (LPDVRDGLKP…GLEDLEDEDL (467 aa)). Tyr-123 serves as the catalytic O-(5'-phospho-DNA)-tyrosine intermediate. The GyrA-box motif lies at 528–534 (QNRGGRG). Residues 810 to 893 (VNEEDDNEEN…ASDNEEDSDE (84 aa)) form a disordered region. Composition is skewed to acidic residues over residues 812 to 821 (EEDDNEENAD) and 852 to 862 (DAEMESVESPE). Residues 863–879 (NDDRIDIRQDFMDRVNE) are compositionally biased toward basic and acidic residues. Acidic residues predominate over residues 880-893 (DIESASDNEEDSDE).

The protein belongs to the type II topoisomerase GyrA/ParC subunit family. As to quaternary structure, heterotetramer, composed of two GyrA and two GyrB chains. In the heterotetramer, GyrA contains the active site tyrosine that forms a transient covalent intermediate with DNA, while GyrB binds cofactors and catalyzes ATP hydrolysis.

The protein localises to the cytoplasm. It catalyses the reaction ATP-dependent breakage, passage and rejoining of double-stranded DNA.. Functionally, a type II topoisomerase that negatively supercoils closed circular double-stranded (ds) DNA in an ATP-dependent manner to modulate DNA topology and maintain chromosomes in an underwound state. Negative supercoiling favors strand separation, and DNA replication, transcription, recombination and repair, all of which involve strand separation. Also able to catalyze the interconversion of other topological isomers of dsDNA rings, including catenanes and knotted rings. Type II topoisomerases break and join 2 DNA strands simultaneously in an ATP-dependent manner. This chain is DNA gyrase subunit A, found in Staphylococcus epidermidis (strain ATCC 35984 / DSM 28319 / BCRC 17069 / CCUG 31568 / BM 3577 / RP62A).